The primary structure comprises 204 residues: Phosphoheptose isomerase (204 aa).

In terms of domain architecture, SIS spans 38-199; that stretch reads MAVALARGGK…LFEAVMELGP (162 aa). Position 53–55 (53–55) interacts with substrate; sequence NGG. Zn(2+) is bound by residues His-62 and Glu-66. Residues Glu-66, 95 to 96, 121 to 123, Ser-126, and Gln-172 contribute to the substrate site; these read ND and STS. Residues Gln-172 and His-180 each contribute to the Zn(2+) site.

This sequence belongs to the SIS family. GmhA subfamily. As to quaternary structure, homotetramer. Zn(2+) serves as cofactor.

The protein localises to the cytoplasm. The enzyme catalyses 2 D-sedoheptulose 7-phosphate = D-glycero-alpha-D-manno-heptose 7-phosphate + D-glycero-beta-D-manno-heptose 7-phosphate. The protein operates within carbohydrate biosynthesis; D-glycero-D-manno-heptose 7-phosphate biosynthesis; D-glycero-alpha-D-manno-heptose 7-phosphate and D-glycero-beta-D-manno-heptose 7-phosphate from sedoheptulose 7-phosphate: step 1/1. Catalyzes the isomerization of sedoheptulose 7-phosphate in D-glycero-D-manno-heptose 7-phosphate. The sequence is that of Phosphoheptose isomerase from Solidesulfovibrio magneticus (strain ATCC 700980 / DSM 13731 / RS-1) (Desulfovibrio magneticus).